We begin with the raw amino-acid sequence, 199 residues long: Recombination protein RecR (199 aa).

The segment at 57-72 (CSQCHNITDTDPCQIC) adopts a C4-type zinc-finger fold. In terms of domain architecture, Toprim spans 80–176 (TTICVVQESR…KVTRLAHGLP (97 aa)).

It belongs to the RecR family.

In terms of biological role, may play a role in DNA repair. It seems to be involved in an RecBC-independent recombinational process of DNA repair. It may act with RecF and RecO. The sequence is that of Recombination protein RecR from Shouchella clausii (strain KSM-K16) (Alkalihalobacillus clausii).